Reading from the N-terminus, the 255-residue chain is Accessory gland-specific peptide 26Aa (255 aa).

The first 18 residues, 1 to 18 (MNQILLCSQILLLLFAVA), serve as a signal peptide directing secretion. The disordered stretch occupies residues 86-110 (PINNSKSRKNSSTLPSQILTDKPNQ). Residues 87-110 (INNSKSRKNSSTLPSQILTDKPNQ) are compositionally biased toward polar residues. Residues Asn88, Asn95, and Asn136 are each glycosylated (N-linked (GlcNAc...) asparagine). Disordered regions lie at residues 177–197 (NAQNARKPTKSCKKRPSKDIA) and 235–255 (NNPATDVPTGKSPSEGNPSTT). A compositionally biased stretch (basic residues) spans 183–192 (KPTKSCKKRP). Residues 245–255 (KSPSEGNPSTT) show a composition bias toward polar residues.

It undergoes several cleavages as it is secreted and it is further processed in the recipient female. In terms of tissue distribution, main cells of the accessory glands of males.

It is found in the secreted. The protein resides in the extracellular space. This protein is transferred from male to female's hemolymph during mating, affecting egglaying and behavior after mating. This chain is Accessory gland-specific peptide 26Aa (Acp26Aa), found in Drosophila simulans (Fruit fly).